The chain runs to 412 residues: Ribosomal RNA large subunit methyltransferase G (412 aa).

Residues 386-412 are disordered; that stretch reads KAEPHENGESSSDTPNPQSSLYGGVKR. Positions 394 to 406 are enriched in polar residues; sequence ESSSDTPNPQSSL.

The protein belongs to the methyltransferase superfamily. RlmG family.

The protein resides in the cytoplasm. The enzyme catalyses guanosine(1835) in 23S rRNA + S-adenosyl-L-methionine = N(2)-methylguanosine(1835) in 23S rRNA + S-adenosyl-L-homocysteine + H(+). Functionally, specifically methylates the guanine in position 1835 (m2G1835) of 23S rRNA. The sequence is that of Ribosomal RNA large subunit methyltransferase G from Shewanella sediminis (strain HAW-EB3).